The chain runs to 349 residues: tRNA-specific 2-thiouridylase MnmA (349 aa).

ATP contacts are provided by residues G7–S14 and L33. The Nucleophile role is filled by C94. The cysteines at positions 94 and 193 are disulfide-linked. G119 is an ATP binding site. An interaction with tRNA region spans residues K143–Q145. Residue C193 is the Cysteine persulfide intermediate of the active site. Residues R298–Y299 are interaction with tRNA.

Belongs to the MnmA/TRMU family.

The protein localises to the cytoplasm. The enzyme catalyses S-sulfanyl-L-cysteinyl-[protein] + uridine(34) in tRNA + AH2 + ATP = 2-thiouridine(34) in tRNA + L-cysteinyl-[protein] + A + AMP + diphosphate + H(+). Its function is as follows. Catalyzes the 2-thiolation of uridine at the wobble position (U34) of tRNA, leading to the formation of s(2)U34. In Rippkaea orientalis (strain PCC 8801 / RF-1) (Cyanothece sp. (strain PCC 8801)), this protein is tRNA-specific 2-thiouridylase MnmA.